Reading from the N-terminus, the 377-residue chain is N-acetyldiaminopimelate deacetylase (377 aa).

Asp-69 is a catalytic residue. Glu-128 serves as the catalytic Proton acceptor.

The protein belongs to the peptidase M20A family. N-acetyldiaminopimelate deacetylase subfamily.

The enzyme catalyses N-acetyl-(2S,6S)-2,6-diaminopimelate + H2O = (2S,6S)-2,6-diaminopimelate + acetate. Its pathway is amino-acid biosynthesis; L-lysine biosynthesis via DAP pathway; LL-2,6-diaminopimelate from (S)-tetrahydrodipicolinate (acetylase route): step 3/3. Its function is as follows. Catalyzes the conversion of N-acetyl-diaminopimelate to diaminopimelate and acetate. The chain is N-acetyldiaminopimelate deacetylase from Streptococcus sanguinis (strain SK36).